The primary structure comprises 517 residues: ATP synthase subunit alpha (517 aa).

Residue 174-181 (GDRQTGKT) participates in ATP binding.

Belongs to the ATPase alpha/beta chains family. In terms of assembly, F-type ATPases have 2 components, CF(1) - the catalytic core - and CF(0) - the membrane proton channel. CF(1) has five subunits: alpha(3), beta(3), gamma(1), delta(1), epsilon(1). CF(0) has three main subunits: a(1), b(2) and c(9-12). The alpha and beta chains form an alternating ring which encloses part of the gamma chain. CF(1) is attached to CF(0) by a central stalk formed by the gamma and epsilon chains, while a peripheral stalk is formed by the delta and b chains.

Its subcellular location is the cell inner membrane. The enzyme catalyses ATP + H2O + 4 H(+)(in) = ADP + phosphate + 5 H(+)(out). In terms of biological role, produces ATP from ADP in the presence of a proton gradient across the membrane. The alpha chain is a regulatory subunit. This chain is ATP synthase subunit alpha, found in Polaromonas sp. (strain JS666 / ATCC BAA-500).